A 528-amino-acid chain; its full sequence is Keratin, type II cytoskeletal 78 (528 aa).

A head region spans residues 1–104 (MSLSPCRARR…DPQFQVVRTQ (104 aa)). The interval 23–45 (VGRGRTGFSSRSLSSFGGCRGGS) is disordered. The segment covering 24-39 (GRGRTGFSSRSLSSFG) has biased composition (low complexity). The tract at residues 105–140 (ETQQIRVLNNQFASFIDKVRFLEQQNKVLETKWHLL) is coil 1A. An IF rod domain is found at 105-418 (ETQQIRVLNN…RLLEGEECRM (314 aa)). The segment at 141–159 (QQQGLSDRPQGLESFFEAY) is linker 1. Positions 160–252 (LVRLRTQLEE…LYEEELGQLQ (93 aa)) are coil 1B. The segment at 253 to 275 (TQASDMSVVLSMDNNRCLDFRDL) is linker 12. The interval 276-415 (IAEVRARYEE…TYRRLLEGEE (140 aa)) is coil 2. The tract at residues 416–528 (CRMSGECASQ…ESSLKTSVTY (113 aa)) is tail.

It belongs to the intermediate filament family. Heterotetramer of two type I and two type II keratins.

This Bos taurus (Bovine) protein is Keratin, type II cytoskeletal 78 (KRT78).